Consider the following 216-residue polypeptide: Probable nicotinate-nucleotide adenylyltransferase (216 aa).

This sequence belongs to the NadD family.

It catalyses the reaction nicotinate beta-D-ribonucleotide + ATP + H(+) = deamido-NAD(+) + diphosphate. Its pathway is cofactor biosynthesis; NAD(+) biosynthesis; deamido-NAD(+) from nicotinate D-ribonucleotide: step 1/1. In terms of biological role, catalyzes the reversible adenylation of nicotinate mononucleotide (NaMN) to nicotinic acid adenine dinucleotide (NaAD). This is Probable nicotinate-nucleotide adenylyltransferase from Shewanella baltica (strain OS185).